Reading from the N-terminus, the 367-residue chain is Voltage-gated potassium channel subunit beta-2 (367 aa).

Thr56, Trp57, Gln63, and Asp85 together coordinate NADP(+). Tyr90 (proton donor/acceptor) is an active-site residue. Residues Asn158, Ser188, Arg189, Gln214, Trp243, Ser244, Pro245, Leu246, Ala247, Cys248, Lys254, Tyr262, Arg264, Gly323, Ser325, Gln329, Glu332, and Asn333 each coordinate NADP(+).

The protein belongs to the shaker potassium channel beta subunit family. As to quaternary structure, forms heteromultimeric complex with alpha subunits.

It is found in the cytoplasm. The protein resides in the membrane. It localises to the cell membrane. Its subcellular location is the cell projection. The protein localises to the axon. It is found in the synapse. The protein resides in the synaptosome. It localises to the cytoskeleton. In terms of biological role, regulatory subunit of the voltage-gated potassium (Kv) Shaker channels composed of pore-forming and potassium-conducting alpha subunits and of regulatory beta subunits. The beta-2/KCNAB2 cytoplasmic subunit may promote potassium channel closure via a mechanism that does not involve physical obstruction of the channel pore. Enhances current amplitude of Kv1.1/KCNA1 and Kv2.2/KCNA2 channels. May display nicotinamide adenine dinucleotide phosphate (NADPH)-dependent aldoketoreductase activity by catalyzing the NADPH-dependent reduction of a wide range of aldehyde and ketone substrates. The binding of oxidized and reduced nucleotide may alter Kv channel gating and contribute to dynamic fine tuning of cell excitability. The sequence is that of Voltage-gated potassium channel subunit beta-2 (kcnab2) from Xenopus laevis (African clawed frog).